The primary structure comprises 944 residues: Respiratory burst oxidase homolog protein F (944 aa).

Residues 2-387 are Cytoplasmic-facing; it reads KPFSKNDRRR…VYIMQENWKR (386 aa). 2 coiled-coil regions span residues 102 to 126 and 157 to 184; these read QFSQ…KRFS and LEAR…RGLR. EF-hand-like stretches follow at residues 207-215 and 241-252; these read EKNGYIYRS and RRLKVEKINHDE. EF-hand domains follow at residues 264–299 and 308–343; these read SFDS…SASA and QAEE…KDTY. Ca(2+) is bound by residues aspartate 277, asparagine 279, aspartate 281, arginine 283, glutamate 288, aspartate 321, and tyrosine 327. Residues serine 354 and serine 358 each carry the phosphoserine modification. Residues 388 to 408 traverse the membrane as a helical segment; the sequence is IWVLSLWIMIMIGLFLWKFFQ. The Extracellular portion of the chain corresponds to 409 to 475; that stretch reads YKQKDAFHVM…INFHKTIAGA (67 aa). Residues 426–583 enclose the Ferric oxidoreductase domain; sequence KGAAETLKFN…LFVIVYILLI (158 aa). The helical transmembrane segment at 476-492 threads the bilayer; that stretch reads IVVAVILHIGDHLACDF. The Cytoplasmic segment spans residues 493-527; it reads PRIVRATEYDYNRYLFHYFQTKQPTYFDLVKGPEG. Residues 528–548 form a helical membrane-spanning segment; the sequence is ITGILMVILMIISFTLATRWF. Topologically, residues 549 to 570 are extracellular; sequence RRNLVKLPKPFDRLTGFNAFWY. Residues 571–591 form a helical membrane-spanning segment; the sequence is SHHLFVIVYILLILHGIFLYF. The Cytoplasmic segment spans residues 592-599; that stretch reads AKPWYVRT. Residues 600–617 form a helical membrane-spanning segment; the sequence is TWMYLAVPVLLYGGERTL. Residues 618 to 744 lie on the Extracellular side of the membrane; it reads RYFRSGSYSV…PYGAPAQDYR (127 aa). An FAD-binding FR-type domain is found at 622–742; that stretch reads SGSYSVRLLK…DGPYGAPAQD (121 aa). A helical membrane pass occupies residues 745–765; it reads KYDVLLLVGLGIGATPFISIL. Residues 766-944 lie on the Cytoplasmic side of the membrane; that stretch reads KDLLNNIVKM…TKFEFHKEHF (179 aa).

It belongs to the RBOH (TC 5.B.1.3) family. In terms of assembly, monomer and homodimer. Interacts (via N-terminus) with CIPK26. Interacts (via N-terminus) with SRC2. In terms of processing, not glycosylated. Phosphorylated by CIPK26. As to expression, expressed in roots, stems, seedlings, inflorescences, leaves and guard cells.

Its subcellular location is the cell membrane. With respect to regulation, inhibited by diphenylene iodonium (DPI). In terms of biological role, calcium-dependent NADPH oxidase that generates superoxide. Generates reactive oxygen species (ROS) during incompatible interactions with pathogens and is important in the regulation of the hypersensitive response (HR). Involved in abscisic acid-induced stomatal closing and in UV-B and abscisic acid ROS-dependent signaling. The protein is Respiratory burst oxidase homolog protein F (RBOHF) of Arabidopsis thaliana (Mouse-ear cress).